A 381-amino-acid polypeptide reads, in one-letter code: Sulfate adenylyltransferase (381 aa).

The protein belongs to the sulfate adenylyltransferase family.

It carries out the reaction sulfate + ATP + H(+) = adenosine 5'-phosphosulfate + diphosphate. It participates in sulfur metabolism; hydrogen sulfide biosynthesis; sulfite from sulfate: step 1/3. In Carboxydothermus hydrogenoformans (strain ATCC BAA-161 / DSM 6008 / Z-2901), this protein is Sulfate adenylyltransferase.